A 228-amino-acid polypeptide reads, in one-letter code: Ribose-5-phosphate isomerase A (228 aa).

Residues 27–30 (TGTT), 86–89 (DGAD), and 100–103 (KGMG) each bind substrate. Residue Glu109 is the Proton acceptor of the active site. Residue Lys127 coordinates substrate.

The protein belongs to the ribose 5-phosphate isomerase family. In terms of assembly, homodimer.

It catalyses the reaction aldehydo-D-ribose 5-phosphate = D-ribulose 5-phosphate. Its pathway is carbohydrate degradation; pentose phosphate pathway; D-ribose 5-phosphate from D-ribulose 5-phosphate (non-oxidative stage): step 1/1. In terms of biological role, catalyzes the reversible conversion of ribose-5-phosphate to ribulose 5-phosphate. The sequence is that of Ribose-5-phosphate isomerase A from Borreliella afzelii (strain PKo) (Borrelia afzelii).